The following is a 185-amino-acid chain: NAD(P)H-dependent FAD/FMN reductase GTNG_3158 (185 aa).

In terms of assembly, anthranilate 3-monooxygenase consists of a reductase component (GTNG_3158) and an oxygenase component HpaH.

It carries out the reaction FADH2 + NAD(+) = FAD + NADH + 2 H(+). The catalysed reaction is FADH2 + NADP(+) = FAD + NADPH + 2 H(+). Involved in the pathway of tryptophan degradation. Reduces FAD/FMN to FADH(2)/FMNH(2), which are subsequently used for the hydroxylation of anthranilate. It can reduce either FAD or flavin mononucleotide (FMN) but prefers FAD. The enzyme has a slight preference for NADPH as acceptor. The chain is NAD(P)H-dependent FAD/FMN reductase GTNG_3158 from Geobacillus thermodenitrificans (strain NG80-2).